The sequence spans 287 residues: Large ribosomal subunit protein uL2 (287 aa).

Residues 221-287 are disordered; that stretch reads RGSVMNPCDH…SKRSRGGRDS (67 aa). Residues 258-287 show a composition bias toward basic residues; sequence KTRKRNKPSNRFVLRKRRRTSKRSRGGRDS.

This sequence belongs to the universal ribosomal protein uL2 family. In terms of assembly, part of the 50S ribosomal subunit. Forms a bridge to the 30S subunit in the 70S ribosome.

In terms of biological role, one of the primary rRNA binding proteins. Required for association of the 30S and 50S subunits to form the 70S ribosome, for tRNA binding and peptide bond formation. It has been suggested to have peptidyltransferase activity; this is somewhat controversial. Makes several contacts with the 16S rRNA in the 70S ribosome. This is Large ribosomal subunit protein uL2 from Prochlorococcus marinus (strain MIT 9303).